The primary structure comprises 199 residues: Probable DNA-directed RNA polymerase subunit delta (199 aa).

In terms of domain architecture, HTH HARE-type spans 14-81 (LSLIEVAHAI…GDNMWGLRAW (68 aa)). Acidic residues-rich tracts occupy residues 116–147 (GDDD…DTDD), 157–171 (AGVD…DETL), and 182–199 (LNDD…DESK). The interval 116–199 (GDDDDVIDYD…DYDDEDDESK (84 aa)) is disordered.

This sequence belongs to the RpoE family. In terms of assembly, RNAP is composed of a core of 2 alpha, a beta and a beta' subunits. The core is associated with a delta subunit and one of several sigma factors.

In terms of biological role, participates in both the initiation and recycling phases of transcription. In the presence of the delta subunit, RNAP displays an increased specificity of transcription, a decreased affinity for nucleic acids, and an increased efficiency of RNA synthesis because of enhanced recycling. The chain is Probable DNA-directed RNA polymerase subunit delta from Lactiplantibacillus plantarum (strain ATCC BAA-793 / NCIMB 8826 / WCFS1) (Lactobacillus plantarum).